Consider the following 130-residue polypeptide: Small ribosomal subunit protein uS8 (130 aa).

This sequence belongs to the universal ribosomal protein uS8 family. Part of the 30S ribosomal subunit.

Its function is as follows. One of the primary rRNA binding proteins, it binds directly to 16S rRNA central domain where it helps coordinate assembly of the platform of the 30S subunit. The chain is Small ribosomal subunit protein uS8 from Thermococcus sibiricus (strain DSM 12597 / MM 739).